The following is a 221-amino-acid chain: Anti-sigma-W factor RsiW (221 aa).

Residues 1 to 87 (MKTCHSHDEL…AKWKLKAKRH (87 aa)) lie on the Cytoplasmic side of the membrane. Positions 30, 34, and 37 each coordinate Zn(2+). Residues 88–108 (PILVAAAIFLIMMSAAFFSAW) form a helical membrane-spanning segment. At 109-221 (SHTTDGIAVS…GEDDPHSTDN (113 aa)) the chain is on the extracellular side.

The protein belongs to the zinc-associated anti-sigma factor (ZAS) superfamily. Anti-sigma-W factor family. Zn(2+) is required as a cofactor. Is processed by three successive proteolytic events. First, the extracellular region of RsiW is cleaved by PrsW (Site-1 cleavage) in response to cell envelope stresses. Next, it undergoes cleavage at an intramembrane site (Site-2 cleavage) mediated by RasP. This cleavage uncovers a cryptic proteolytic tag with conserved alanine residues in the transmembrane segment, that is recognized mainly by the ClpXP protease, which completely degrades the protein in the cytoplasm and leads to the induction of the sigma-W-controlled genes.

The protein localises to the membrane. Is the anti-sigma factor for SigW. The presence of RsiW leads to the inactivation of SigW, and its proteolytic destruction to sigma-W activation. The chain is Anti-sigma-W factor RsiW (rsiW) from Shouchella clausii (strain KSM-K16) (Alkalihalobacillus clausii).